Reading from the N-terminus, the 222-residue chain is Interleukin-12 subunit alpha (222 aa).

Positions 1–25 (MCPPRGLLLVTILVLLNHLDHLSLA) are cleaved as a signal peptide. 3 disulfides stabilise this stretch: Cys-40/Cys-113, Cys-67/Cys-199, and Cys-88/Cys-126. Asn-42, Asn-96, Asn-110, and Asn-183 each carry an N-linked (GlcNAc...) asparagine glycan.

Belongs to the IL-6 superfamily. As to quaternary structure, heterodimer with IL12B; disulfide-linked. This heterodimer is known as interleukin IL-12. Heterodimer with EBI3/IL27B; not disulfide-linked. This heterodimer is known as interleukin IL-35. Interacts with NBR1; this interaction promotes IL-12 secretion.

Its subcellular location is the secreted. In terms of biological role, heterodimerizes with IL12B to form the IL-12 cytokine or with EBI3/IL27B to form the IL-35 cytokine. IL-12 is primarily produced by professional antigen-presenting cells (APCs) such as B-cells and dendritic cells (DCs) as well as macrophages and granulocytes and regulates T-cell and natural killer-cell responses, induces the production of interferon-gamma (IFN-gamma), favors the differentiation of T-helper 1 (Th1) cells and is an important link between innate resistance and adaptive immunity. Mechanistically, exerts its biological effects through a receptor composed of IL12R1 and IL12R2 subunits. Binding to the receptor results in the rapid tyrosine phosphorylation of a number of cellular substrates including the JAK family kinases TYK2 and JAK2. In turn, recruited STAT4 gets phosphorylated and translocates to the nucleus where it regulates cytokine/growth factor responsive genes. As part of IL-35, plays essential roles in maintaining the immune homeostasis of the liver microenvironment and also functions as an immune-suppressive cytokine. Mediates biological events through unconventional receptors composed of IL12RB2 and gp130/IL6ST heterodimers or homodimers. Signaling requires the transcription factors STAT1 and STAT4, which form a unique heterodimer that binds to distinct DNA sites. This Felis catus (Cat) protein is Interleukin-12 subunit alpha (IL12A).